The chain runs to 204 residues: Thymidylate kinase (204 aa).

13-20 is a binding site for ATP; it reads GIDGSGKS.

Belongs to the thymidylate kinase family.

It catalyses the reaction dTMP + ATP = dTDP + ADP. Phosphorylation of dTMP to form dTDP in both de novo and salvage pathways of dTTP synthesis. This chain is Thymidylate kinase, found in Leptospira interrogans serogroup Icterohaemorrhagiae serovar copenhageni (strain Fiocruz L1-130).